Here is a 650-residue protein sequence, read N- to C-terminus: Acetyl-coenzyme A synthetase (650 aa).

CoA contacts are provided by residues 191–194, threonine 311, and asparagine 335; that span reads RAGR. Residues 387-389, 411-416, aspartate 500, and arginine 515 each bind ATP; these read GEP and DTWWQT. Position 523 (serine 523) interacts with CoA. Residue arginine 526 participates in ATP binding. Positions 537, 539, and 542 each coordinate Mg(2+). Arginine 584 lines the CoA pocket. Residue lysine 609 is modified to N6-acetyllysine.

The protein belongs to the ATP-dependent AMP-binding enzyme family. Mg(2+) is required as a cofactor. Post-translationally, acetylated. Deacetylation by the SIR2-homolog deacetylase activates the enzyme.

The catalysed reaction is acetate + ATP + CoA = acetyl-CoA + AMP + diphosphate. In terms of biological role, catalyzes the conversion of acetate into acetyl-CoA (AcCoA), an essential intermediate at the junction of anabolic and catabolic pathways. AcsA undergoes a two-step reaction. In the first half reaction, AcsA combines acetate with ATP to form acetyl-adenylate (AcAMP) intermediate. In the second half reaction, it can then transfer the acetyl group from AcAMP to the sulfhydryl group of CoA, forming the product AcCoA. In Shewanella halifaxensis (strain HAW-EB4), this protein is Acetyl-coenzyme A synthetase.